Reading from the N-terminus, the 185-residue chain is Ribosome-recycling factor (185 aa).

The protein belongs to the RRF family.

It localises to the cytoplasm. Functionally, responsible for the release of ribosomes from messenger RNA at the termination of protein biosynthesis. May increase the efficiency of translation by recycling ribosomes from one round of translation to another. This Ectopseudomonas mendocina (strain ymp) (Pseudomonas mendocina) protein is Ribosome-recycling factor.